A 71-amino-acid polypeptide reads, in one-letter code: MALPDIAETRKLSDTEINEQISGTRRELFDLRFQQATSRLENPHRFRHARVKLAQLLTVQQERERSAAPAN.

The protein belongs to the universal ribosomal protein uL29 family.

The polypeptide is Large ribosomal subunit protein uL29 (Synechococcus sp. (strain RCC307)).